The following is a 438-amino-acid chain: MADYQGKNVVIIGLGLTGLSCVDFFLARGVTPRVMDTRMTPPGLDKLPEAVERHTGSLNDEWLMAADLIVASPGIALAHPSLSAAADAGIEIVGDIELFCREAQAPIVAITGSNGKSTVTTLVGEMAKAAGVNVGVGGNIGLPALMLLDAECELYVLELSSFQLETTSSLQAVAATILNVTEDHMDRYPFGLQQYRAAKLRIYENAKVCVVNADDALTMPIRGADERCVSFGVNMGDYHLNHQQGETWLRVKGEKVLNVKEMKLSGQHNYTNALAALALADAAGLPRASSLKALTTFTGLPHRFEVVLEHNGVRWINDSKATNVGSTEAALNGLQVDGTLHLLLGGDGKSADFSPLARYLNGDNVRLYCFGRDGAQLAALRPEVAEQTETMEQAMRLLAPRVQPGDMVLLSPACASLDQFKNFEQRGNEFARLAKELG.

ATP is bound at residue Gly112 to Thr118.

This sequence belongs to the MurCDEF family.

It localises to the cytoplasm. It carries out the reaction UDP-N-acetyl-alpha-D-muramoyl-L-alanine + D-glutamate + ATP = UDP-N-acetyl-alpha-D-muramoyl-L-alanyl-D-glutamate + ADP + phosphate + H(+). It participates in cell wall biogenesis; peptidoglycan biosynthesis. Its function is as follows. Cell wall formation. Catalyzes the addition of glutamate to the nucleotide precursor UDP-N-acetylmuramoyl-L-alanine (UMA). The protein is UDP-N-acetylmuramoylalanine--D-glutamate ligase of Shigella boydii serotype 4 (strain Sb227).